A 136-amino-acid chain; its full sequence is MPRDLFSDALTRLRNALRVNKQTVIIPFSNLNYSFSNILLEEHLLEKKTILSKKYIKLEGLKFYNKKSDHTLFNFFKNCQRLSKPSNRLYIKAGDIPLIDNGLGFVILSTSYGLMTGKKARALNIGGELLCQFNFQ.

This sequence belongs to the universal ribosomal protein uS8 family. As to quaternary structure, part of the 30S ribosomal subunit.

The protein localises to the plastid. One of the primary rRNA binding proteins, it binds directly to 16S rRNA central domain where it helps coordinate assembly of the platform of the 30S subunit. In Helicosporidium sp. subsp. Simulium jonesii (Green alga), this protein is Small ribosomal subunit protein uS8c (rps8).